The sequence spans 482 residues: ATP synthase subunit beta (482 aa).

167–174 (GGAGVGKT) is a binding site for ATP.

This sequence belongs to the ATPase alpha/beta chains family. In terms of assembly, F-type ATPases have 2 components, CF(1) - the catalytic core - and CF(0) - the membrane proton channel. CF(1) has five subunits: alpha(3), beta(3), gamma(1), delta(1), epsilon(1). CF(0) has three main subunits: a(1), b(2) and c(9-12). The alpha and beta chains form an alternating ring which encloses part of the gamma chain. CF(1) is attached to CF(0) by a central stalk formed by the gamma and epsilon chains, while a peripheral stalk is formed by the delta and b chains.

It localises to the cell membrane. The enzyme catalyses ATP + H2O + 4 H(+)(in) = ADP + phosphate + 5 H(+)(out). Functionally, produces ATP from ADP in the presence of a proton gradient across the membrane. The catalytic sites are hosted primarily by the beta subunits. The protein is ATP synthase subunit beta of Corynebacterium aurimucosum (strain ATCC 700975 / DSM 44827 / CIP 107346 / CN-1) (Corynebacterium nigricans).